The following is a 494-amino-acid chain: Glycerol kinase (494 aa).

Residue threonine 13 coordinates ADP. Positions 13, 14, and 15 each coordinate ATP. Threonine 13 is a binding site for sn-glycerol 3-phosphate. Residue arginine 17 coordinates ADP. Positions 83, 84, 135, and 244 each coordinate sn-glycerol 3-phosphate. 5 residues coordinate glycerol: arginine 83, glutamate 84, tyrosine 135, aspartate 244, and glutamine 245. Positions 266 and 309 each coordinate ADP. Threonine 266, glycine 309, glutamine 313, and glycine 410 together coordinate ATP. Residues glycine 410 and asparagine 414 each coordinate ADP.

It belongs to the FGGY kinase family.

The catalysed reaction is glycerol + ATP = sn-glycerol 3-phosphate + ADP + H(+). It participates in polyol metabolism; glycerol degradation via glycerol kinase pathway; sn-glycerol 3-phosphate from glycerol: step 1/1. With respect to regulation, inhibited by fructose 1,6-bisphosphate (FBP). Key enzyme in the regulation of glycerol uptake and metabolism. Catalyzes the phosphorylation of glycerol to yield sn-glycerol 3-phosphate. In Shewanella baltica (strain OS195), this protein is Glycerol kinase.